The chain runs to 191 residues: 3-isopropylmalate dehydratase small subunit (191 aa).

The protein belongs to the LeuD family. LeuD type 1 subfamily. Heterodimer of LeuC and LeuD.

It carries out the reaction (2R,3S)-3-isopropylmalate = (2S)-2-isopropylmalate. It participates in amino-acid biosynthesis; L-leucine biosynthesis; L-leucine from 3-methyl-2-oxobutanoate: step 2/4. Its function is as follows. Catalyzes the isomerization between 2-isopropylmalate and 3-isopropylmalate, via the formation of 2-isopropylmaleate. The polypeptide is 3-isopropylmalate dehydratase small subunit (Solibacter usitatus (strain Ellin6076)).